Reading from the N-terminus, the 266-residue chain is Putative pyruvate, phosphate dikinase regulatory protein (266 aa).

147 to 154 (GLSRTSKT) provides a ligand contact to ADP.

The protein belongs to the pyruvate, phosphate/water dikinase regulatory protein family. PDRP subfamily.

It catalyses the reaction N(tele)-phospho-L-histidyl/L-threonyl-[pyruvate, phosphate dikinase] + ADP = N(tele)-phospho-L-histidyl/O-phospho-L-threonyl-[pyruvate, phosphate dikinase] + AMP + H(+). The enzyme catalyses N(tele)-phospho-L-histidyl/O-phospho-L-threonyl-[pyruvate, phosphate dikinase] + phosphate + H(+) = N(tele)-phospho-L-histidyl/L-threonyl-[pyruvate, phosphate dikinase] + diphosphate. Functionally, bifunctional serine/threonine kinase and phosphorylase involved in the regulation of the pyruvate, phosphate dikinase (PPDK) by catalyzing its phosphorylation/dephosphorylation. This chain is Putative pyruvate, phosphate dikinase regulatory protein, found in Clostridium perfringens (strain 13 / Type A).